Here is a 276-residue protein sequence, read N- to C-terminus: 4-deoxy-L-threo-5-hexosulose-uronate ketol-isomerase (276 aa).

Zn(2+)-binding residues include histidine 194, histidine 196, glutamate 201, and histidine 243.

Belongs to the KduI family. It depends on Zn(2+) as a cofactor.

The enzyme catalyses 5-dehydro-4-deoxy-D-glucuronate = 3-deoxy-D-glycero-2,5-hexodiulosonate. It participates in glycan metabolism; pectin degradation; 2-dehydro-3-deoxy-D-gluconate from pectin: step 4/5. Catalyzes the isomerization of 5-dehydro-4-deoxy-D-glucuronate to 3-deoxy-D-glycero-2,5-hexodiulosonate. In Caldicellulosiruptor bescii (strain ATCC BAA-1888 / DSM 6725 / KCTC 15123 / Z-1320) (Anaerocellum thermophilum), this protein is 4-deoxy-L-threo-5-hexosulose-uronate ketol-isomerase.